Reading from the N-terminus, the 598-residue chain is Membrane protein insertase YidC (598 aa).

The chain crosses the membrane as a helical span at residues 7 to 27 (NYFIAIALSVLIVLGWQFLYM). Residues 37–76 (AQEAQKAQQQTEQVQQPAAGGQTPAQTSGAAPSGQAAATA) form a disordered region. Low complexity predominate over residues 40–76 (AQKAQQQTEQVQQPAAGGQTPAQTSGAAPSGQAAATA). The next 4 helical transmembrane spans lie at 377–397 (FGVAILCTTIVVKALFFPLAS), 447–467 (WPVALQIPIFFSLYKVIYITI), 492–512 (LFGLLPFEGPTLLHLGVWPLI), and 538–558 (WMPLVFMFMLASFPAGLVIYW).

It belongs to the OXA1/ALB3/YidC family. Type 1 subfamily. In terms of assembly, interacts with the Sec translocase complex via SecD. Specifically interacts with transmembrane segments of nascent integral membrane proteins during membrane integration.

The protein localises to the cell inner membrane. Functionally, required for the insertion and/or proper folding and/or complex formation of integral membrane proteins into the membrane. Involved in integration of membrane proteins that insert both dependently and independently of the Sec translocase complex, as well as at least some lipoproteins. Aids folding of multispanning membrane proteins. The protein is Membrane protein insertase YidC of Rhizobium johnstonii (strain DSM 114642 / LMG 32736 / 3841) (Rhizobium leguminosarum bv. viciae).